The sequence spans 349 residues: S-adenosylmethionine:tRNA ribosyltransferase-isomerase (349 aa).

This sequence belongs to the QueA family. Monomer.

The protein resides in the cytoplasm. It carries out the reaction 7-aminomethyl-7-carbaguanosine(34) in tRNA + S-adenosyl-L-methionine = epoxyqueuosine(34) in tRNA + adenine + L-methionine + 2 H(+). It participates in tRNA modification; tRNA-queuosine biosynthesis. In terms of biological role, transfers and isomerizes the ribose moiety from AdoMet to the 7-aminomethyl group of 7-deazaguanine (preQ1-tRNA) to give epoxyqueuosine (oQ-tRNA). This is S-adenosylmethionine:tRNA ribosyltransferase-isomerase from Pseudomonas fluorescens (strain SBW25).